A 428-amino-acid polypeptide reads, in one-letter code: D-amino acid dehydrogenase (428 aa).

FAD is bound at residue 3-17 (VVILGSGVVGVASAY).

It belongs to the DadA oxidoreductase family. FAD is required as a cofactor.

It catalyses the reaction a D-alpha-amino acid + A + H2O = a 2-oxocarboxylate + AH2 + NH4(+). The protein operates within amino-acid degradation; D-alanine degradation; NH(3) and pyruvate from D-alanine: step 1/1. Oxidative deamination of D-amino acids. The sequence is that of D-amino acid dehydrogenase from Burkholderia pseudomallei (strain 1106a).